Consider the following 121-residue polypeptide: Histone H2B.6 (121 aa).

A disordered region spans residues 1–28; the sequence is MAPKAEKKPKVEKRVPGKEGETSKKKAK. N6-acetyllysine is present on residues lysine 7 and lysine 13.

This sequence belongs to the histone H2B family. In terms of assembly, the nucleosome is a histone octamer containing two molecules each of H2A, H2B, H3 and H4 assembled in one H3-H4 heterotetramer and two H2A-H2B heterodimers. The octamer wraps approximately 147 bp of DNA. Post-translationally, can be acetylated to form H2BK6ac and H2BK33ac. Expressed preferentially in meristematic tissues.

It is found in the nucleus. The protein localises to the chromosome. In terms of biological role, core component of nucleosome. Nucleosomes wrap and compact DNA into chromatin, limiting DNA accessibility to the cellular machineries which require DNA as a template. Histones thereby play a central role in transcription regulation, DNA repair, DNA replication and chromosomal stability. DNA accessibility is regulated via a complex set of post-translational modifications of histones, also called histone code, and nucleosome remodeling. The polypeptide is Histone H2B.6 (TH123) (Triticum aestivum (Wheat)).